We begin with the raw amino-acid sequence, 205 residues long: Large ribosomal subunit protein uL3c (205 aa).

Positions 130-150 (RGPMSHGSKNHRQPGSIGAGT) are disordered.

Belongs to the universal ribosomal protein uL3 family. In terms of assembly, part of the 50S ribosomal subunit.

It is found in the plastid. It localises to the chloroplast. In terms of biological role, one of the primary rRNA binding proteins, it binds directly near the 3'-end of the 23S rRNA, where it nucleates assembly of the 50S subunit. The protein is Large ribosomal subunit protein uL3c (rpl3) of Gracilaria tenuistipitata var. liui (Red alga).